A 226-amino-acid chain; its full sequence is 7-cyano-7-deazaguanine synthase (226 aa).

Leu-8–Leu-18 is an ATP binding site. Positions 188, 198, 201, and 204 each coordinate Zn(2+).

It belongs to the QueC family. Zn(2+) is required as a cofactor.

It catalyses the reaction 7-carboxy-7-deazaguanine + NH4(+) + ATP = 7-cyano-7-deazaguanine + ADP + phosphate + H2O + H(+). The protein operates within purine metabolism; 7-cyano-7-deazaguanine biosynthesis. In terms of biological role, catalyzes the ATP-dependent conversion of 7-carboxy-7-deazaguanine (CDG) to 7-cyano-7-deazaguanine (preQ(0)). This is 7-cyano-7-deazaguanine synthase from Nitrosomonas eutropha (strain DSM 101675 / C91 / Nm57).